We begin with the raw amino-acid sequence, 297 residues long: Light-independent protochlorophyllide reductase iron-sulfur ATP-binding protein (297 aa).

ATP is bound by residues 41–46 and Lys70; that span reads GIGKST. Residue Ser45 coordinates Mg(2+). The [4Fe-4S] cluster site is built by Cys126 and Cys160. ATP is bound by residues 211–212 and 235–237; these read NR and PDL.

Belongs to the NifH/BchL/ChlL family. In terms of assembly, homodimer. Protochlorophyllide reductase is composed of three subunits; BchL, BchN and BchB. It depends on [4Fe-4S] cluster as a cofactor.

It catalyses the reaction chlorophyllide a + oxidized 2[4Fe-4S]-[ferredoxin] + 2 ADP + 2 phosphate = protochlorophyllide a + reduced 2[4Fe-4S]-[ferredoxin] + 2 ATP + 2 H2O. The protein operates within porphyrin-containing compound metabolism; bacteriochlorophyll biosynthesis (light-independent). Component of the dark-operative protochlorophyllide reductase (DPOR) that uses Mg-ATP and reduced ferredoxin to reduce ring D of protochlorophyllide (Pchlide) to form chlorophyllide a (Chlide). This reaction is light-independent. The L component serves as a unique electron donor to the NB-component of the complex, and binds Mg-ATP. This is Light-independent protochlorophyllide reductase iron-sulfur ATP-binding protein from Cereibacter sphaeroides (strain ATCC 17025 / ATH 2.4.3) (Rhodobacter sphaeroides).